The primary structure comprises 381 residues: Probable peptidoglycan glycosyltransferase FtsW (381 aa).

The Cytoplasmic portion of the chain corresponds to 1-15 (MNNKKKIVKIFFYDK). A helical transmembrane segment spans residues 16–36 (ILFFLLISLSIIGIIIVSSAS). Topologically, residues 37 to 53 (ISFGIRLHNDYFYFAKR) are periplasmic. A helical transmembrane segment spans residues 54–74 (NLLYFFLSFFLFFQIIRIPIN). The Cytoplasmic portion of the chain corresponds to 75-81 (QLEKYNK). A helical transmembrane segment spans residues 82-102 (IALLINLFLLIIVFIIGNSIN). Topologically, residues 103–109 (GAIRWIK) are periplasmic. The helical transmembrane segment at 110–130 (IGFFSIQPSECSKLILFFYIS) threads the bilayer. The Cytoplasmic portion of the chain corresponds to 131–143 (DYIVKKNKELKNK). A helical membrane pass occupies residues 144 to 164 (LWGFLKPIIIMLIFVILLLMQ). At 165–166 (PD) the chain is on the periplasmic side. The next 2 helical transmembrane spans lie at 167–187 (LGNSLILFLTTLLLFFLAGIN) and 188–208 (LWKCCFMFLFGLLTIFILIIF). At 209-278 (KPYRIRRILS…FSILGEELGY (70 aa)) the chain is on the periplasmic side. The chain crosses the membrane as a helical span at residues 279–299 (IGSIIILIMLFFVIFRIFLIG). Topologically, residues 300–317 (KNSFIQKKFFSGYFSFSV) are cytoplasmic. A helical membrane pass occupies residues 318–338 (GIWISLQTIMNVGGVIGILPI). At 339–343 (KGLTL) the chain is on the periplasmic side. Residues 344 to 364 (PFISYGGSSLITIFSAIAIVI) form a helical membrane-spanning segment. At 365-381 (RSDFELRINKYQAYLKQ) the chain is on the cytoplasmic side.

The protein belongs to the SEDS family. FtsW subfamily.

Its subcellular location is the cell inner membrane. The enzyme catalyses [GlcNAc-(1-&gt;4)-Mur2Ac(oyl-L-Ala-gamma-D-Glu-L-Lys-D-Ala-D-Ala)](n)-di-trans,octa-cis-undecaprenyl diphosphate + beta-D-GlcNAc-(1-&gt;4)-Mur2Ac(oyl-L-Ala-gamma-D-Glu-L-Lys-D-Ala-D-Ala)-di-trans,octa-cis-undecaprenyl diphosphate = [GlcNAc-(1-&gt;4)-Mur2Ac(oyl-L-Ala-gamma-D-Glu-L-Lys-D-Ala-D-Ala)](n+1)-di-trans,octa-cis-undecaprenyl diphosphate + di-trans,octa-cis-undecaprenyl diphosphate + H(+). It functions in the pathway cell wall biogenesis; peptidoglycan biosynthesis. Peptidoglycan polymerase that is essential for cell division. This Wigglesworthia glossinidia brevipalpis protein is Probable peptidoglycan glycosyltransferase FtsW.